The chain runs to 646 residues: Autophagy-related protein 28 (646 aa).

Disordered stretches follow at residues 1–148 and 221–245; these read MSSP…HVDN and PTRSTPDGNVIPVRQPVSNKPRGLK. The segment covering 12 to 21 has biased composition (polar residues); sequence SPRQRLSNPL. Low complexity predominate over residues 63–75; sequence SATSTRRSSSPAS. Polar residues predominate over residues 106–122; it reads MMMNQHPSRQSTVSSHG. 2 coiled-coil regions span residues 283–350 and 485–514; these read LDKM…MEDV and QQAAMQSQLSEMDDVVQELQKRLQLAESKH. 2 disordered regions span residues 475-494 and 546-612; these read SQAGDADEEPQQAAMQSQLS and AAAV…RGSA. Composition is skewed to basic and acidic residues over residues 557 to 575 and 588 to 597; these read STDKAEGTSQEERADSHDE and RMEDHDHDPP.

Belongs to the ATG28 family.

It localises to the cytoplasm. The protein localises to the vacuole membrane. It is found in the cytoplasmic vesicle membrane. Its function is as follows. Required for the autophagic degradation of peroxisomes called pexophagy, but not essential for general autophagy. Involved in resistance to elevated pH. The polypeptide is Autophagy-related protein 28 (Gibberella zeae (strain ATCC MYA-4620 / CBS 123657 / FGSC 9075 / NRRL 31084 / PH-1) (Wheat head blight fungus)).